A 422-amino-acid chain; its full sequence is Tyrosine--tRNA ligase (422 aa).

An L-tyrosine-binding site is contributed by Tyr34. The short motif at 39–48 is the 'HIGH' region element; the sequence is PTEDSLHVGH. L-tyrosine is bound by residues Tyr172 and Gln176. The 'KMSKS' region motif lies at 232–236; that stretch reads KFGKT. An ATP-binding site is contributed by Lys235. The S4 RNA-binding domain maps to 354-412; sequence KDLQEALVLSSLAQSRTQAKNMIISNSISINTKKIVNKNYIIDDNDKLFNQFTLLSRGK.

The protein belongs to the class-I aminoacyl-tRNA synthetase family. TyrS type 1 subfamily. In terms of assembly, homodimer.

It localises to the cytoplasm. The catalysed reaction is tRNA(Tyr) + L-tyrosine + ATP = L-tyrosyl-tRNA(Tyr) + AMP + diphosphate + H(+). In terms of biological role, catalyzes the attachment of tyrosine to tRNA(Tyr) in a two-step reaction: tyrosine is first activated by ATP to form Tyr-AMP and then transferred to the acceptor end of tRNA(Tyr). This Buchnera aphidicola subsp. Schizaphis graminum (strain Sg) protein is Tyrosine--tRNA ligase.